A 278-amino-acid polypeptide reads, in one-letter code: Octanoyltransferase LipM (278 aa).

A BPL/LPL catalytic domain is found at 33 to 248 (KKMPPTIRFY…GFEKGLDVEL (216 aa)). Residue Cys-150 is the Acyl-thioester intermediate of the active site.

The protein belongs to the octanoyltransferase LipM family. In terms of assembly, monomer.

The enzyme catalyses octanoyl-[ACP] + L-lysyl-[protein] = N(6)-octanoyl-L-lysyl-[protein] + holo-[ACP] + H(+). It participates in protein modification; protein lipoylation via endogenous pathway; protein N(6)-(lipoyl)lysine from octanoyl-[acyl-carrier-protein]. Functionally, catalyzes the transfer of endogenously produced octanoic acid from octanoyl-acyl-carrier-protein onto the lipoyl domain of GcvH, an intermediate carrier during protein lipoylation. The polypeptide is Octanoyltransferase LipM (Bacillus anthracis).